Reading from the N-terminus, the 313-residue chain is 4-diphosphocytidyl-2-C-methyl-D-erythritol kinase (313 aa).

Residue Lys-29 is part of the active site. Residue 113–123 (PMGGGVGGGSS) coordinates ATP. Asp-155 is an active-site residue.

It belongs to the GHMP kinase family. IspE subfamily.

It carries out the reaction 4-CDP-2-C-methyl-D-erythritol + ATP = 4-CDP-2-C-methyl-D-erythritol 2-phosphate + ADP + H(+). It participates in isoprenoid biosynthesis; isopentenyl diphosphate biosynthesis via DXP pathway; isopentenyl diphosphate from 1-deoxy-D-xylulose 5-phosphate: step 3/6. In terms of biological role, catalyzes the phosphorylation of the position 2 hydroxy group of 4-diphosphocytidyl-2C-methyl-D-erythritol. The polypeptide is 4-diphosphocytidyl-2-C-methyl-D-erythritol kinase (Haemophilus influenzae (strain ATCC 51907 / DSM 11121 / KW20 / Rd)).